The primary structure comprises 1285 residues: Tat-binding homolog 7 (1285 aa).

Disordered regions lie at residues methionine 1–arginine 95, methionine 121–arginine 173, glycine 224–glutamine 243, and glutamine 258–arginine 359. Composition is skewed to acidic residues over residues glutamate 226–glutamate 237 and glutamine 258–glutamate 270. The span at asparagine 311–arginine 325 shows a compositional bias: basic residues. Glycine 446–threonine 453 contributes to the ATP binding site. One can recognise a Bromo domain in the interval alanine 928 to methionine 1032. The tract at residues glutamate 1100–glutamate 1196 is disordered. The span at lysine 1136–lysine 1149 shows a compositional bias: basic residues. A compositionally biased stretch (acidic residues) spans proline 1155–aspartate 1175.

This sequence belongs to the AAA ATPase family.

In terms of biological role, thought to form a complex that enhances transcription from repetitive DNA sequences by modulating chromatin structure. The polypeptide is Tat-binding homolog 7 (Caenorhabditis briggsae).